We begin with the raw amino-acid sequence, 403 residues long: Cell cycle checkpoint control protein RAD9B (403 aa).

The interval 285–347 (PLSQARRSHP…ASAGQDDIFE (63 aa)) is disordered. Phosphoserine occurs at positions 354 and 363.

This sequence belongs to the rad9 family. Interacts with HUS1, HUS1B, RAD1, RAD9A and RAD17.

This chain is Cell cycle checkpoint control protein RAD9B (Rad9b), found in Mus musculus (Mouse).